Here is a 400-residue protein sequence, read N- to C-terminus: Subtilisin-like protease 7 (400 aa).

A signal peptide spans 1-20; it reads MGFITKAIPLALAAASVING. Residues 21–119 constitute a propeptide that is removed on maturation; it reads AEIMETRAGV…IERDARVQIN (99 aa). The 83-residue stretch at 36–118 folds into the Inhibitor I9 domain; it reads KYIVVMNDGM…YIERDARVQI (83 aa). N58 carries an N-linked (GlcNAc...) asparagine glycan. The Peptidase S8 domain maps to 129–400; it reads SWGLARVGSK…SKLINNGSGM (272 aa). Active-site charge relay system residues include D161 and H192. N-linked (GlcNAc...) asparagine glycosylation is found at N222 and N252. S346 (charge relay system) is an active-site residue. N396 carries N-linked (GlcNAc...) asparagine glycosylation.

It belongs to the peptidase S8 family.

Its subcellular location is the secreted. In terms of biological role, secreted subtilisin-like serine protease with keratinolytic activity that contributes to pathogenicity. In Trichophyton verrucosum (Cattle ringworm fungus), this protein is Subtilisin-like protease 7 (SUB7).